The following is a 460-amino-acid chain: DEAD-box helicase Dbp80 (460 aa).

Serine 26 is subject to Phosphoserine. Threonine 30 bears the Phosphothreonine mark. A Q motif motif is present at residues 73 to 101; that stretch reads KTFEALHLKASLLKGIYAMGFNTPSKIQE. Residues 106–276 enclose the Helicase ATP-binding domain; the sequence is TLLADPPQNM…RLIVADPTII (171 aa). 119–126 is a binding site for ATP; that stretch reads SQSGTGKT. The DEAD box motif lies at 223–226; it reads DEAD. The Helicase C-terminal domain maps to 287–455; the sequence is NIKQYYVKCK…VLNTDSADDI (169 aa).

Belongs to the DEAD box helicase family. DDX19/DBP5 subfamily.

It is found in the cytoplasm. Its subcellular location is the nucleus. The protein resides in the nucleoplasm. It carries out the reaction ATP + H2O = ADP + phosphate + H(+). Functionally, ATP-dependent RNA helicase involved in mRNA export from the nucleus. This Drosophila melanogaster (Fruit fly) protein is DEAD-box helicase Dbp80 (Dbp80).